Reading from the N-terminus, the 66-residue chain is Large ribosomal subunit protein bL35c (66 aa).

It belongs to the bacterial ribosomal protein bL35 family.

The protein resides in the plastid. It localises to the chloroplast. This chain is Large ribosomal subunit protein bL35c, found in Gracilaria tenuistipitata var. liui (Red alga).